Reading from the N-terminus, the 651-residue chain is Acetyl-coenzyme A synthetase (651 aa).

Residues 189 to 192 (RGGK), Thr-311, and Asn-335 each bind CoA. ATP is bound by residues 387–389 (GEP), 411–416 (DTWWQT), Asp-500, and Arg-515. Residue Ser-523 participates in CoA binding. Position 526 (Arg-526) interacts with ATP. Residues Val-537, His-539, and Val-542 each contribute to the Mg(2+) site. CoA is bound at residue Arg-584. Lys-609 carries the N6-acetyllysine modification.

Belongs to the ATP-dependent AMP-binding enzyme family. Mg(2+) serves as cofactor. In terms of processing, acetylated. Deacetylation by the SIR2-homolog deacetylase activates the enzyme.

The enzyme catalyses acetate + ATP + CoA = acetyl-CoA + AMP + diphosphate. Functionally, catalyzes the conversion of acetate into acetyl-CoA (AcCoA), an essential intermediate at the junction of anabolic and catabolic pathways. AcsA undergoes a two-step reaction. In the first half reaction, AcsA combines acetate with ATP to form acetyl-adenylate (AcAMP) intermediate. In the second half reaction, it can then transfer the acetyl group from AcAMP to the sulfhydryl group of CoA, forming the product AcCoA. The protein is Acetyl-coenzyme A synthetase of Agrobacterium fabrum (strain C58 / ATCC 33970) (Agrobacterium tumefaciens (strain C58)).